The sequence spans 1761 residues: Lysine-specific demethylase 3B (1761 aa).

Position 2 is an N-acetylalanine (alanine 2). The segment at 253-346 is disordered; the sequence is DNSAPQSEGG…QRAKQPPSTF (94 aa). Residues 298–309 show a composition bias toward basic and acidic residues; it reads ASKKLKGDRGEV. Residue lysine 361 is modified to N6-acetyllysine. Disordered regions lie at residues 370-394 and 438-496; these read QDEP…QTPL and DTGL…NGVL. 3 stretches are compositionally biased toward polar residues: residues 380 to 392, 453 to 468, and 477 to 495; these read ASFT…TGQT, SRSQ…SILA, and PSSS…SNGV. Residues serine 492, serine 546, serine 556, and serine 560 each carry the phosphoserine modification. The disordered stretch occupies residues 572–603; sequence RSVLGTDTKPGSKAGSSVDRKVPAESMPTLTP. A Phosphothreonine modification is found at threonine 614. A disordered region spans residues 714–762; it reads GPSLSAMGNGRSSSPTSSLTQPIEMPTLSSSPTEERPTVGPGQQDNPLL. Residues 723–745 are compositionally biased toward polar residues; the sequence is GRSSSPTSSLTQPIEMPTLSSSP. Serine 766, serine 773, serine 778, and serine 779 each carry phosphoserine. A Glycyl lysine isopeptide (Lys-Gly) (interchain with G-Cter in SUMO2) cross-link involves residue lysine 788. Serine 798 is subject to Phosphoserine. Residues 805-827 form a disordered region; sequence ACRQDSDSSTNSDLSDLSDSEEQ. The C6-type zinc finger occupies 1031-1056; it reads CDVCETTLFNIHWVCRKCGFGVCLDC. Residues 1142 to 1161 are compositionally biased toward polar residues; the sequence is GMSQLPSINPSASSGNETTF. Residues 1142 to 1220 are disordered; that stretch reads GMSQLPSINP…PCPDTAPPSS (79 aa). The span at 1174-1193 shows a compositional bias: basic and acidic residues; it reads EPDHVPKADSTDIRSEEPLK. The span at 1194–1204 shows a compositional bias: polar residues; sequence TDSSASNSNSE. Serine 1253 and serine 1259 each carry phosphoserine. Positions 1293 to 1297 match the LXXLL motif motif; it reads LRDLL. One can recognise a JmjC domain in the interval 1498–1721; sequence MPTRFEDLME…HCFRLTQEFR (224 aa). Fe cation contacts are provided by histidine 1560, aspartate 1562, and histidine 1689.

The protein belongs to the JHDM2 histone demethylase family. Requires Fe(2+) as cofactor. In terms of tissue distribution, ubiquitous. Highly expressed in placenta, skeletal muscle, kidney, heart and liver.

It is found in the nucleus. It catalyses the reaction N(6),N(6)-dimethyl-L-lysyl(9)-[histone H3] + 2 2-oxoglutarate + 2 O2 = L-lysyl(9)-[histone H3] + 2 formaldehyde + 2 succinate + 2 CO2. Its function is as follows. Histone demethylase that specifically demethylates 'Lys-9' of histone H3, thereby playing a central role in histone code. Demethylation of Lys residue generates formaldehyde and succinate. May have tumor suppressor activity. This Homo sapiens (Human) protein is Lysine-specific demethylase 3B (KDM3B).